Consider the following 188-residue polypeptide: Elongation factor P (188 aa).

The protein belongs to the elongation factor P family.

Its subcellular location is the cytoplasm. Its pathway is protein biosynthesis; polypeptide chain elongation. Involved in peptide bond synthesis. Stimulates efficient translation and peptide-bond synthesis on native or reconstituted 70S ribosomes in vitro. Probably functions indirectly by altering the affinity of the ribosome for aminoacyl-tRNA, thus increasing their reactivity as acceptors for peptidyl transferase. The polypeptide is Elongation factor P (Bifidobacterium longum (strain DJO10A)).